A 98-amino-acid chain; its full sequence is Large ribosomal subunit protein uL23 (98 aa).

Belongs to the universal ribosomal protein uL23 family. As to quaternary structure, part of the 50S ribosomal subunit. Contacts protein L29, and trigger factor when it is bound to the ribosome.

One of the early assembly proteins it binds 23S rRNA. One of the proteins that surrounds the polypeptide exit tunnel on the outside of the ribosome. Forms the main docking site for trigger factor binding to the ribosome. This is Large ribosomal subunit protein uL23 from Herpetosiphon aurantiacus (strain ATCC 23779 / DSM 785 / 114-95).